A 508-amino-acid polypeptide reads, in one-letter code: Lysine--tRNA ligase (508 aa).

Mg(2+) contacts are provided by Glu418 and Glu425.

This sequence belongs to the class-II aminoacyl-tRNA synthetase family. As to quaternary structure, homodimer. Mg(2+) serves as cofactor.

The protein localises to the cytoplasm. It catalyses the reaction tRNA(Lys) + L-lysine + ATP = L-lysyl-tRNA(Lys) + AMP + diphosphate. The chain is Lysine--tRNA ligase from Burkholderia multivorans (strain ATCC 17616 / 249).